The following is a 318-amino-acid chain: Methionyl-tRNA formyltransferase (318 aa).

120–123 (SLLP) lines the (6S)-5,6,7,8-tetrahydrofolate pocket.

This sequence belongs to the Fmt family.

The catalysed reaction is L-methionyl-tRNA(fMet) + (6R)-10-formyltetrahydrofolate = N-formyl-L-methionyl-tRNA(fMet) + (6S)-5,6,7,8-tetrahydrofolate + H(+). Its function is as follows. Attaches a formyl group to the free amino group of methionyl-tRNA(fMet). The formyl group appears to play a dual role in the initiator identity of N-formylmethionyl-tRNA by promoting its recognition by IF2 and preventing the misappropriation of this tRNA by the elongation apparatus. This chain is Methionyl-tRNA formyltransferase, found in Variovorax paradoxus (strain S110).